The following is a 206-amino-acid chain: Small ribosomal subunit protein uS3 (206 aa).

The KH type-2 domain occupies 39-107 (IRSYINESFK…SVEVNVVGIK (69 aa)).

Belongs to the universal ribosomal protein uS3 family. In terms of assembly, part of the 30S ribosomal subunit. Forms a tight complex with proteins S10 and S14.

In terms of biological role, binds the lower part of the 30S subunit head. Binds mRNA in the 70S ribosome, positioning it for translation. This Wolbachia sp. subsp. Brugia malayi (strain TRS) protein is Small ribosomal subunit protein uS3.